The following is a 431-amino-acid chain: Adenylosuccinate synthetase (431 aa).

GTP is bound by residues 13–19 (GDEGKGK) and 41–43 (GHT). The active-site Proton acceptor is the Asp14. 2 residues coordinate Mg(2+): Asp14 and Gly41. Residues 14–17 (DEGK), 39–42 (NAGH), Thr130, Arg144, Gln225, Thr240, and Arg304 each bind IMP. Residue His42 is the Proton donor of the active site. 300–306 (AVTGRPR) serves as a coordination point for substrate. GTP is bound by residues Arg306, 332–334 (KLD), and 415–417 (STG).

Belongs to the adenylosuccinate synthetase family. In terms of assembly, homodimer. Mg(2+) serves as cofactor.

It localises to the cytoplasm. It catalyses the reaction IMP + L-aspartate + GTP = N(6)-(1,2-dicarboxyethyl)-AMP + GDP + phosphate + 2 H(+). It participates in purine metabolism; AMP biosynthesis via de novo pathway; AMP from IMP: step 1/2. In terms of biological role, plays an important role in the de novo pathway of purine nucleotide biosynthesis. Catalyzes the first committed step in the biosynthesis of AMP from IMP. The protein is Adenylosuccinate synthetase of Legionella pneumophila subsp. pneumophila (strain Philadelphia 1 / ATCC 33152 / DSM 7513).